We begin with the raw amino-acid sequence, 512 residues long: Glutamate--tRNA ligase (512 aa).

Positions 11-21 (PSPTGALHIGG) match the 'HIGH' region motif. Positions 263–267 (KLSKR) match the 'KMSKS' region motif. Residue K266 coordinates ATP.

It belongs to the class-I aminoacyl-tRNA synthetase family. Glutamate--tRNA ligase type 1 subfamily. In terms of assembly, monomer.

The protein resides in the cytoplasm. It catalyses the reaction tRNA(Glu) + L-glutamate + ATP = L-glutamyl-tRNA(Glu) + AMP + diphosphate. Catalyzes the attachment of glutamate to tRNA(Glu) in a two-step reaction: glutamate is first activated by ATP to form Glu-AMP and then transferred to the acceptor end of tRNA(Glu). The polypeptide is Glutamate--tRNA ligase (Amoebophilus asiaticus (strain 5a2)).